The chain runs to 279 residues: Tryptophan synthase alpha chain (279 aa).

Catalysis depends on proton acceptor residues glutamate 50 and aspartate 61.

Belongs to the TrpA family. Tetramer of two alpha and two beta chains.

It catalyses the reaction (1S,2R)-1-C-(indol-3-yl)glycerol 3-phosphate + L-serine = D-glyceraldehyde 3-phosphate + L-tryptophan + H2O. It functions in the pathway amino-acid biosynthesis; L-tryptophan biosynthesis; L-tryptophan from chorismate: step 5/5. In terms of biological role, the alpha subunit is responsible for the aldol cleavage of indoleglycerol phosphate to indole and glyceraldehyde 3-phosphate. The chain is Tryptophan synthase alpha chain from Rhizobium etli (strain ATCC 51251 / DSM 11541 / JCM 21823 / NBRC 15573 / CFN 42).